The following is a 598-amino-acid chain: Vacuolin-A (598 aa).

Residues 482–539 (IKTTEARLKAETDNIALEQRNKAIISESQAKLSSAQREAESLLITAEAQKKASELQGE) are a coiled coil.

It belongs to the vacuolin family.

It localises to the endosome membrane. It is found in the lysosome. The sequence is that of Vacuolin-A (vacA) from Dictyostelium discoideum (Social amoeba).